The primary structure comprises 353 residues: MADKRFFEAKEPLSLGEIAGRIGAALADADDGSRIVTGVAPLDTAGSNDLSFLDNPKYAEAFYATAAGACIVHPRFAERAPDNVALILSDQPYRAYALVAQIFHPDEAHGADTFGARGEIHPRATVHPTAKLGTGVTLEPGVTIGAGVEIGNNTVIGTNTSVGKGCTVGKDCFIGPNVTLSHAHLGDRVMVHPGVRIGQDGFGFAMGLPRHEKVPQLGRVIVQDDVEIGANSTVDRGAGPDTVIGEGTKIDNLVQIGHNVEIGRGCIIVSQTGIAGSTKLGDFVVLAAQVGVTGHLTINSGAQIAARGAVVHDVPAGQQYGGVPAKPIAEWRREVVELRKLGRRRRSGTKADD.

H258 functions as the Proton acceptor in the catalytic mechanism.

Belongs to the transferase hexapeptide repeat family. LpxD subfamily. As to quaternary structure, homotrimer.

The enzyme catalyses a UDP-3-O-[(3R)-3-hydroxyacyl]-alpha-D-glucosamine + a (3R)-hydroxyacyl-[ACP] = a UDP-2-N,3-O-bis[(3R)-3-hydroxyacyl]-alpha-D-glucosamine + holo-[ACP] + H(+). Its pathway is bacterial outer membrane biogenesis; LPS lipid A biosynthesis. In terms of biological role, catalyzes the N-acylation of UDP-3-O-acylglucosamine using 3-hydroxyacyl-ACP as the acyl donor. Is involved in the biosynthesis of lipid A, a phosphorylated glycolipid that anchors the lipopolysaccharide to the outer membrane of the cell. The protein is UDP-3-O-acylglucosamine N-acyltransferase of Parvibaculum lavamentivorans (strain DS-1 / DSM 13023 / NCIMB 13966).